The primary structure comprises 458 residues: F-box/FBD/LRR-repeat protein At1g78750 (458 aa).

The F-box domain occupies 17 to 67 (VDWISNLPETLLCQVLFYLPTKDVVKSSVLSSRWRNLWKYVPGFNLSYCDF). LRR repeat units follow at residues 152–183 (CETL…HLSI), 184–209 (VKFA…NINR), 231–258 (VADT…RLSD), 302–327 (DFLV…YDYS), and 345–370 (FYGY…VVGS). Residues 376–428 (KEGINILSVPRGFLSSLEYVKIERPLKGEAMEMKLVSYLLENSTILKKLTLCL) form the FBD domain.

This is F-box/FBD/LRR-repeat protein At1g78750 from Arabidopsis thaliana (Mouse-ear cress).